Here is a 394-residue protein sequence, read N- to C-terminus: Lipid-A-disaccharide synthase (394 aa).

Belongs to the LpxB family.

It carries out the reaction 2-N,3-O-bis[(3R)-3-hydroxytetradecanoyl]-alpha-D-glucosaminyl 1-phosphate + UDP-2-N,3-O-bis[(3R)-3-hydroxytetradecanoyl]-alpha-D-glucosamine = lipid A disaccharide (E. coli) + UDP + H(+). The catalysed reaction is a lipid X + a UDP-2-N,3-O-bis[(3R)-3-hydroxyacyl]-alpha-D-glucosamine = a lipid A disaccharide + UDP + H(+). It functions in the pathway glycolipid biosynthesis; lipid IV(A) biosynthesis; lipid IV(A) from (3R)-3-hydroxytetradecanoyl-[acyl-carrier-protein] and UDP-N-acetyl-alpha-D-glucosamine: step 5/6. Functionally, condensation of UDP-2,3-diacylglucosamine and 2,3-diacylglucosamine-1-phosphate to form lipid A disaccharide, a precursor of lipid A, a phosphorylated glycolipid that anchors the lipopolysaccharide to the outer membrane of the cell. The protein is Lipid-A-disaccharide synthase of Yersinia pestis.